The chain runs to 259 residues: Leucine-rich repeat-containing protein 3B (259 aa).

Residues 1–33 (MNLVDLWLTRSLSMCLLLQSFVLMILCFHSASM) form the signal peptide. Residues 34–64 (CPKGCLCSSSGGLNVTCSNANLKEIPRDLPP) form the LRRNT domain. Residue Asn47 is glycosylated (N-linked (GlcNAc...) asparagine). 3 LRR repeats span residues 65–86 (ETVL…IFKD), 89–110 (QLRV…AFKG), and 114–135 (TLQT…AFNN). An N-linked (GlcNAc...) asparagine glycan is attached at Asn94. Positions 145–197 (NPWHCDCTLQQVLRSMASNHETAHNVICKTSVLDEHAGRPFLNAANDADLCNL) constitute an LRRCT domain. Residues 205 to 225 (AMLVTMFGWFTMVISYVVYYV) traverse the membrane as a helical segment.

This sequence belongs to the LRRC3 family.

The protein resides in the membrane. This is Leucine-rich repeat-containing protein 3B (LRRC3B) from Homo sapiens (Human).